Here is a 471-residue protein sequence, read N- to C-terminus: Phosphoglycerate kinase (471 aa).

Residues Asp-24–Asn-26, Arg-41, His-64–Arg-67, Arg-127, and Arg-169 contribute to the substrate site. Residues Lys-220, Gly-307, Glu-338, and Gly-368–Ser-371 contribute to the ATP site. The disordered stretch occupies residues Lys-417–Lys-471. Residues Thr-439 to Lys-455 show a composition bias toward low complexity.

It belongs to the phosphoglycerate kinase family. Monomer.

The protein resides in the cytoplasm. The catalysed reaction is (2R)-3-phosphoglycerate + ATP = (2R)-3-phospho-glyceroyl phosphate + ADP. The protein operates within carbohydrate degradation; glycolysis; pyruvate from D-glyceraldehyde 3-phosphate: step 2/5. This Malacoplasma penetrans (strain HF-2) (Mycoplasma penetrans) protein is Phosphoglycerate kinase.